Here is a 91-residue protein sequence, read N- to C-terminus: Auxin-responsive protein SAUR20 (91 aa).

This sequence belongs to the ARG7 family.

It localises to the cell membrane. Functions as a positive effector of cell expansion through modulation of auxin transport. The sequence is that of Auxin-responsive protein SAUR20 from Arabidopsis thaliana (Mouse-ear cress).